The chain runs to 204 residues: Peptidyl-tRNA hydrolase (204 aa).

Y14 contacts tRNA. Residue H19 is the Proton acceptor of the active site. TRNA contacts are provided by F64, N66, and N112.

It belongs to the PTH family. As to quaternary structure, monomer.

It is found in the cytoplasm. The catalysed reaction is an N-acyl-L-alpha-aminoacyl-tRNA + H2O = an N-acyl-L-amino acid + a tRNA + H(+). Functionally, hydrolyzes ribosome-free peptidyl-tRNAs (with 1 or more amino acids incorporated), which drop off the ribosome during protein synthesis, or as a result of ribosome stalling. Catalyzes the release of premature peptidyl moieties from peptidyl-tRNA molecules trapped in stalled 50S ribosomal subunits, and thus maintains levels of free tRNAs and 50S ribosomes. This Azorhizobium caulinodans (strain ATCC 43989 / DSM 5975 / JCM 20966 / LMG 6465 / NBRC 14845 / NCIMB 13405 / ORS 571) protein is Peptidyl-tRNA hydrolase.